A 352-amino-acid polypeptide reads, in one-letter code: Rhodopsin (352 aa).

The Extracellular segment spans residues 1–36; it reads MNGTEGPFFYIPMVNTTGIVRSPYEYPQYYLVNPAA. Asn-2 and Asn-15 each carry an N-linked (GlcNAc...) asparagine glycan. Residues 37–61 traverse the membrane as a helical segment; the sequence is YAALGAYMFFLILTGFPINFLTLYV. Residues 62–73 lie on the Cytoplasmic side of the membrane; sequence TLEHKKLRTALN. The chain crosses the membrane as a helical span at residues 74–96; it reads LILLNLAVADLFMVFGGFTTTMY. The Extracellular segment spans residues 97-110; it reads TSMHGYFVLGRLGC. Cysteines 110 and 187 form a disulfide. The helical transmembrane segment at 111–133 threads the bilayer; sequence NVEGFFATLGGEIALWSLVVLAV. The short motif at 134–136 is the 'Ionic lock' involved in activated form stabilization element; it reads ERW. Residues 134–152 lie on the Cytoplasmic side of the membrane; that stretch reads ERWVVVCKPISNFRFTENH. A helical membrane pass occupies residues 153 to 173; the sequence is AIMGVAFSWIMAATCAVPPLV. Over 174–202 the chain is Extracellular; that stretch reads GWSRYIPEGMQCSCGVDYYTRAEGFNNES. The chain crosses the membrane as a helical span at residues 203–224; it reads FVIYMFIVHFLAPLIVIFFCYG. Topologically, residues 225 to 252 are cytoplasmic; sequence RLLCAVKEAAAAQQESETTQRAEREVTR. A helical transmembrane segment spans residues 253-274; that stretch reads MVIIMVIGFLTSWLPYASVAWY. Residues 275-286 lie on the Extracellular side of the membrane; that stretch reads IFTHQGTEFGPL. A helical membrane pass occupies residues 287-308; the sequence is FMTIPAFFAKSSALYNPMIYIC. Residue Lys-296 is modified to N6-(retinylidene)lysine. Residues 309–352 lie on the Cytoplasmic side of the membrane; that stretch reads MNKQFRHCMITTLCCGKNPFEEEEGASTTKTEASSVSSSSVSPA. Residues Cys-322 and Cys-323 are each lipidated (S-palmitoyl cysteine). Residues 331 to 352 are disordered; the sequence is EEGASTTKTEASSVSSSSVSPA. Residues 342–352 are compositionally biased toward low complexity; that stretch reads SSVSSSSVSPA.

The protein belongs to the G-protein coupled receptor 1 family. Opsin subfamily. Post-translationally, phosphorylated on some or all of the serine and threonine residues present in the C-terminal region. Contains one covalently linked retinal chromophore.

It is found in the membrane. The protein resides in the cell projection. Its subcellular location is the cilium. It localises to the photoreceptor outer segment. Functionally, photoreceptor required for image-forming vision at low light intensity. While most salt water fish species use retinal as chromophore, most freshwater fish use 3-dehydroretinal, or a mixture of retinal and 3-dehydroretinal. Light-induced isomerization of 11-cis to all-trans retinal triggers a conformational change that activates signaling via G-proteins. Subsequent receptor phosphorylation mediates displacement of the bound G-protein alpha subunit by arrestin and terminates signaling. The protein is Rhodopsin (rho) of Pomatoschistus minutus (Sand goby).